A 249-amino-acid polypeptide reads, in one-letter code: DNA repair protein RecO (249 aa).

Belongs to the RecO family.

Functionally, involved in DNA repair and RecF pathway recombination. The sequence is that of DNA repair protein RecO from Solidesulfovibrio magneticus (strain ATCC 700980 / DSM 13731 / RS-1) (Desulfovibrio magneticus).